The sequence spans 448 residues: Fibulin-5 (448 aa).

An N-terminal signal peptide occupies residues 1–23; the sequence is MPGFKRILTVTVLALCLPTPGNA. Residues 42 to 82 enclose the EGF-like 1; calcium-binding domain; the sequence is DVDECRTIPEACRGDMMCVNQNGGYLCIPRTNPVYRGPYSN. 17 cysteine pairs are disulfide-bonded: cysteine 46–cysteine 59, cysteine 53–cysteine 68, cysteine 131–cysteine 144, cysteine 138–cysteine 153, cysteine 155–cysteine 166, cysteine 172–cysteine 181, cysteine 177–cysteine 190, cysteine 192–cysteine 205, cysteine 211–cysteine 221, cysteine 217–cysteine 230, cysteine 232–cysteine 245, cysteine 251–cysteine 262, cysteine 258–cysteine 271, cysteine 273–cysteine 286, cysteine 292–cysteine 305, cysteine 299–cysteine 314, and cysteine 320–cysteine 332. The Cell attachment site motif lies at 54–56; the sequence is RGD. Positions 127 to 167 constitute an EGF-like 2; calcium-binding domain; sequence DVDECATDSHQCNPTQICINTEGGYTCSCTDGYWLLEGQCL. Positions 168–206 constitute an EGF-like 3; calcium-binding domain; that stretch reads DIDECRYGYCQQLCANVPGSYSCTCNPGFTLNEDGRSCQ. The EGF-like 4; calcium-binding domain occupies 207–246; it reads DVNECATENPCVQTCVNTYGSFICRCDPGYELEDDGVHCS. Residues 245–448 are interaction with LOXL1; it reads CSDMDECSFS…LRIYVSQYPF (204 aa). The region spanning 247–287 is the EGF-like 5; calcium-binding domain; that stretch reads DMDECSFSEFLCQHECVNQPGTYFCSCPAGYILLDDNRSCQ. Asparagine 283 and asparagine 296 each carry an N-linked (GlcNAc...) asparagine glycan. The EGF-like 6; calcium-binding domain maps to 288 to 333; that stretch reads DINECEHRNHTCILQQTCYNLQGGFKCIDPIRCEEPYLRISDNRCM.

It belongs to the fibulin family. Homodimer. Monomer, homodimerizes in presence of Ca(2+). Interacts with ELN. Interacts (via N-terminus) with the integrins ITGAV/ITGB3, ITGAV/ITGB5 and ITGA9/ITGB1. Interacts with FBN1 (via N-terminal domain). Forms a ternary complex with ELN and FBN1. Interacts with EFEMP2 with moderate affinity. Interacts with LOXL1. Post-translationally, N-glycosylated.

It localises to the secreted. It is found in the extracellular space. Its subcellular location is the extracellular matrix. In terms of biological role, essential for elastic fiber formation, is involved in the assembly of continuous elastin (ELN) polymer and promotes the interaction of microfibrils and ELN. Stabilizes and organizes elastic fibers in the skin, lung and vasculature. Promotes adhesion of endothelial cells through interaction of integrins and the RGD motif. Vascular ligand for integrin receptors which may play a role in vascular development and remodeling. May act as an adapter that mediates the interaction between FBN1 and ELN. In Bos taurus (Bovine), this protein is Fibulin-5 (FBLN5).